A 292-amino-acid polypeptide reads, in one-letter code: NAD kinase (292 aa).

Residue Asp73 is the Proton acceptor of the active site. Residues 73 to 74, 147 to 148, His158, Arg175, Asp177, 188 to 193, and Gln247 each bind NAD(+); these read DG, NE, and TAYSLS.

It belongs to the NAD kinase family. A divalent metal cation is required as a cofactor.

The protein resides in the cytoplasm. It carries out the reaction NAD(+) + ATP = ADP + NADP(+) + H(+). Involved in the regulation of the intracellular balance of NAD and NADP, and is a key enzyme in the biosynthesis of NADP. Catalyzes specifically the phosphorylation on 2'-hydroxyl of the adenosine moiety of NAD to yield NADP. The polypeptide is NAD kinase (Escherichia coli O157:H7).